Consider the following 364-residue polypeptide: Probable dual-specificity RNA methyltransferase RlmN (364 aa).

Glu107 serves as the catalytic Proton acceptor. Residues His113–Asp346 enclose the Radical SAM core domain. Residues Cys120 and Cys351 are joined by a disulfide bond. Positions 127, 131, and 134 each coordinate [4Fe-4S] cluster. Residues Gly177–Glu178, Ser209, Ser232–His234, and Asn308 each bind S-adenosyl-L-methionine. The active-site S-methylcysteine intermediate is the Cys351.

It belongs to the radical SAM superfamily. RlmN family. It depends on [4Fe-4S] cluster as a cofactor.

It localises to the cytoplasm. The catalysed reaction is adenosine(2503) in 23S rRNA + 2 reduced [2Fe-2S]-[ferredoxin] + 2 S-adenosyl-L-methionine = 2-methyladenosine(2503) in 23S rRNA + 5'-deoxyadenosine + L-methionine + 2 oxidized [2Fe-2S]-[ferredoxin] + S-adenosyl-L-homocysteine. The enzyme catalyses adenosine(37) in tRNA + 2 reduced [2Fe-2S]-[ferredoxin] + 2 S-adenosyl-L-methionine = 2-methyladenosine(37) in tRNA + 5'-deoxyadenosine + L-methionine + 2 oxidized [2Fe-2S]-[ferredoxin] + S-adenosyl-L-homocysteine. In terms of biological role, specifically methylates position 2 of adenine 2503 in 23S rRNA and position 2 of adenine 37 in tRNAs. Confers resistance to some classes of antibiotics. The protein is Probable dual-specificity RNA methyltransferase RlmN of Staphylococcus aureus (strain Mu3 / ATCC 700698).